A 435-amino-acid polypeptide reads, in one-letter code: Elongation factor 1-alpha (435 aa).

The tr-type G domain maps to lysine 4–valine 229. The segment at glycine 13–serine 20 is G1. Glycine 13 to serine 20 serves as a coordination point for GTP. A Mg(2+)-binding site is contributed by serine 20. A G2 region spans residues glycine 69–asparagine 73. Positions aspartate 90–glycine 93 are G3. GTP is bound by residues aspartate 90–histidine 94 and asparagine 152–aspartate 155. The tract at residues asparagine 152–aspartate 155 is G4. Positions valine 193 to proline 195 are G5.

It belongs to the TRAFAC class translation factor GTPase superfamily. Classic translation factor GTPase family. EF-Tu/EF-1A subfamily.

The protein resides in the cytoplasm. It catalyses the reaction GTP + H2O = GDP + phosphate + H(+). Functionally, GTP hydrolase that promotes the GTP-dependent binding of aminoacyl-tRNA to the A-site of ribosomes during protein biosynthesis. This Sulfolobus acidocaldarius (strain ATCC 33909 / DSM 639 / JCM 8929 / NBRC 15157 / NCIMB 11770) protein is Elongation factor 1-alpha.